The following is a 261-amino-acid chain: uncharacterized protein (261 aa).

Its subcellular location is the plastid. It localises to the chloroplast. This is an uncharacterized protein from Mesostigma viride (Green alga).